Reading from the N-terminus, the 332-residue chain is Anthranilate phosphoribosyltransferase (332 aa).

5-phospho-alpha-D-ribose 1-diphosphate contacts are provided by residues glycine 78, glycine 81–aspartate 82, serine 86, asparagine 88–threonine 91, lysine 106–serine 114, and serine 118. Glycine 78 lines the anthranilate pocket. Residue serine 90 participates in Mg(2+) binding. Asparagine 109 is an anthranilate binding site. An anthranilate-binding site is contributed by arginine 163. Mg(2+)-binding residues include aspartate 222 and glutamate 223.

Belongs to the anthranilate phosphoribosyltransferase family. Homodimer. Requires Mg(2+) as cofactor.

It carries out the reaction N-(5-phospho-beta-D-ribosyl)anthranilate + diphosphate = 5-phospho-alpha-D-ribose 1-diphosphate + anthranilate. It participates in amino-acid biosynthesis; L-tryptophan biosynthesis; L-tryptophan from chorismate: step 2/5. Catalyzes the transfer of the phosphoribosyl group of 5-phosphorylribose-1-pyrophosphate (PRPP) to anthranilate to yield N-(5'-phosphoribosyl)-anthranilate (PRA). This Staphylococcus aureus (strain Mu3 / ATCC 700698) protein is Anthranilate phosphoribosyltransferase.